A 75-amino-acid polypeptide reads, in one-letter code: UPF0352 protein VF_1649 (75 aa).

Belongs to the UPF0352 family.

The protein is UPF0352 protein VF_1649 of Aliivibrio fischeri (strain ATCC 700601 / ES114) (Vibrio fischeri).